A 337-amino-acid polypeptide reads, in one-letter code: DNA-directed RNA polymerase subunit alpha (337 aa).

Positions 1–232 are alpha N-terminal domain (alpha-NTD); the sequence is MVREEVRVCT…IDLFIPFLHA (232 aa). The interval 266–337 is alpha C-terminal domain (alpha-CTD); the sequence is EISFQCIFID…FAIDLPKNKF (72 aa).

The protein belongs to the RNA polymerase alpha chain family. In plastids the minimal PEP RNA polymerase catalytic core is composed of four subunits: alpha, beta, beta', and beta''. When a (nuclear-encoded) sigma factor is associated with the core the holoenzyme is formed, which can initiate transcription.

The protein localises to the plastid. The protein resides in the chloroplast. It catalyses the reaction RNA(n) + a ribonucleoside 5'-triphosphate = RNA(n+1) + diphosphate. DNA-dependent RNA polymerase catalyzes the transcription of DNA into RNA using the four ribonucleoside triphosphates as substrates. The polypeptide is DNA-directed RNA polymerase subunit alpha (Buxus microphylla (Littleleaf boxwood)).